A 63-amino-acid polypeptide reads, in one-letter code: Insect toxin TbIT-1 (63 aa).

In terms of domain architecture, LCN-type CS-alpha/beta spans 2 to 63 (KEGYPVDSRG…VYDNASNKCB (62 aa)). 4 disulfide bridges follow: Cys-12/Cys-62, Cys-16/Cys-38, Cys-24/Cys-43, and Cys-28/Cys-45.

The protein belongs to the long (4 C-C) scorpion toxin superfamily. Sodium channel inhibitor family. Beta subfamily. As to expression, expressed by the venom gland.

The protein localises to the secreted. Functionally, beta toxins bind voltage-independently at site-4 of sodium channels (Nav) and shift the voltage of activation toward more negative potentials thereby affecting sodium channel activation and promoting spontaneous and repetitive firing. This toxin is only active against insects. The protein is Insect toxin TbIT-1 of Tityus bahiensis (Brazilian scorpion).